Consider the following 154-residue polypeptide: Prefoldin subunit 2 (154 aa).

The span at 1–18 (MAENGGRAGKSSGSGTGK) shows a compositional bias: gly residues. 2 disordered regions span residues 1–20 (MAEN…GKGA) and 124–154 (IRLM…VLVS). Over residues 124 to 139 (IRLMGEDEKPAAKENS) the composition is skewed to basic and acidic residues. Over residues 140 to 154 (EGAGAKASSAGVLVS) the composition is skewed to low complexity.

It belongs to the prefoldin subunit beta family. Heterohexamer of two PFD-alpha type and four PFD-beta type subunits. Component of the PAQosome complex which is responsible for the biogenesis of several protein complexes and which consists of R2TP complex members RUVBL1, RUVBL2, RPAP3 and PIH1D1, URI complex members PFDN2, PFDN6, PDRG1, UXT and URI1 as well as ASDURF, POLR2E and DNAAF10/WDR92. Interacts with URI1; the interaction is phosphorylation-dependent and occurs in a growth-dependent manner.

The protein resides in the nucleus. It is found in the cytoplasm. Its subcellular location is the mitochondrion. Its function is as follows. Binds specifically to cytosolic chaperonin (c-CPN) and transfers target proteins to it. Binds to nascent polypeptide chain and promotes folding in an environment in which there are many competing pathways for nonnative proteins. This chain is Prefoldin subunit 2 (PFDN2), found in Bos taurus (Bovine).